We begin with the raw amino-acid sequence, 73 residues long: Mu-conotoxin PIIIA (73 aa).

The N-terminal stretch at 1–19 (MSKLGVLLTICLLLFPITA) is a signal peptide. The propeptide occupies 20–49 (LPMDGDQPADRLAERMQDNISSEEHPFEKR). Gln-50 is modified (pyrrolidone carboxylic acid). 6 cysteine pairs are disulfide-bonded: Cys-53-Cys-65, Cys-53-Cys-70, Cys-54-Cys-70, Cys-54-Cys-71, Cys-60-Cys-65, and Cys-60-Cys-71. 4-hydroxyproline is present on Pro-57. Position 67 is a 4-hydroxyproline (Pro-67). At Cys-71 the chain carries Cysteine amide.

This sequence belongs to the conotoxin M superfamily. 3D-structure of 3 disulfide-bond connectivities isomers is described (PIIIA-1 (C1-C5, C2-C6, C3-C4), PIIIA-2 (C1-C4, C2-C5, C3-C6) and PIIIA-3 (C1-C2, C3-C4, C5-C6)). Only PIIIA-2 contains the cysteine connectivity described as typical for native mu-conotoxins. However, PIIIA-1 is more potent than PIIIA-2, suggesting another possible disulfid connectivity. For this reason, both connectivities have been indicated in features. Expressed by the venom duct.

The protein localises to the secreted. Mu-conotoxins block voltage-gated sodium channels (Nav). This toxin potently blocks rNav1.4/SCN4A (IC(50)=36-41 nM). It also moderately blocks rNav1.1/SCN1A (IC(50)=120 nM), rNav1.2/SCN2A (IC(50)=620 nM), rNav1.3/SCN3A (IC(50)=3.2 uM), mNav1.6/SCN8A (IC(50)=100 nM). This inhibition is reversible. The block of Nav1.1, Nav1.2, and Nav1.6 is modified when beta-subunits are coexpressed with alpha subunits. Hence, blocks of channels containing the beta-1 and beta-3 subunits are more potent (compared to channels without beta subunits), whereas blocks of channels containing the beta-2 and beta-4 are less potent (compared to channels without beta subunits). In vivo, this peptide causes flaccid paralysis in both mice and fish. This is Mu-conotoxin PIIIA from Conus purpurascens (Purple cone).